Reading from the N-terminus, the 103-residue chain is Small ribosomal subunit protein uS10 (103 aa).

Belongs to the universal ribosomal protein uS10 family. In terms of assembly, part of the 30S ribosomal subunit.

In terms of biological role, involved in the binding of tRNA to the ribosomes. The protein is Small ribosomal subunit protein uS10 of Bordetella avium (strain 197N).